The following is a 150-amino-acid chain: Large ribosomal subunit protein bL9 (150 aa).

The protein belongs to the bacterial ribosomal protein bL9 family.

Its function is as follows. Binds to the 23S rRNA. The sequence is that of Large ribosomal subunit protein bL9 from Polaromonas naphthalenivorans (strain CJ2).